Reading from the N-terminus, the 398-residue chain is Elongation factor Tu (398 aa).

The tr-type G domain occupies 10-208 (KPHVNVGTIG…ALDDYIPEPE (199 aa)). A G1 region spans residues 19–26 (GHVDHGKT). Residue 19–26 (GHVDHGKT) coordinates GTP. Mg(2+) is bound at residue Thr26. A G2 region spans residues 61–65 (GITIA). Positions 82–85 (DCPG) are G3. GTP contacts are provided by residues 82–86 (DCPGH) and 137–140 (NKAD). The interval 137–140 (NKAD) is G4. The segment at 175-177 (SAL) is G5.

Belongs to the TRAFAC class translation factor GTPase superfamily. Classic translation factor GTPase family. EF-Tu/EF-1A subfamily. As to quaternary structure, monomer.

The protein resides in the cytoplasm. The catalysed reaction is GTP + H2O = GDP + phosphate + H(+). In terms of biological role, GTP hydrolase that promotes the GTP-dependent binding of aminoacyl-tRNA to the A-site of ribosomes during protein biosynthesis. The chain is Elongation factor Tu from Marinobacter nauticus (strain ATCC 700491 / DSM 11845 / VT8) (Marinobacter aquaeolei).